We begin with the raw amino-acid sequence, 459 residues long: WPP domain-interacting protein 3 (459 aa).

Residues 1–17 (MNESVPDSVEDNGNSVP) show a composition bias toward polar residues. The disordered stretch occupies residues 1 to 78 (MNESVPDSVE…GPVRDEAAPV (78 aa)). The segment covering 52–66 (STRKGFGLKKWRRIK) has biased composition (basic residues). 2 consecutive short sequence motifs (nuclear localization signal) follow at residues 60-61 (KK) and 63-64 (RR). Basic and acidic residues predominate over residues 67-78 (RDGPVRDEAAPV). Positions 86-87 (KR) match the Nuclear localization signal 3 motif. 2 disordered regions span residues 240 to 266 (KEEV…NNNH) and 308 to 330 (TDEL…TSSG). Positions 251 to 266 (NGNKEDDGESKKNNNH) are enriched in basic and acidic residues. The segment covering 308–319 (TDELSSDQPSHQ) has biased composition (polar residues). A coiled-coil region spans residues 331–375 (SKALILKEKVKLLEHKLEEARAALEAKEARIQELENSKIESELEC). One can recognise a KASH domain in the interval 426-459 (KLGFYILTQLILLVSILRFLVLQFSPASRLVIPT). The helical transmembrane segment at 427 to 447 (LGFYILTQLILLVSILRFLVL) threads the bilayer.

In terms of assembly, component of Ran complexes at least composed of WIT1 or WIT2, RANGAP1 or RANGAP2, and WIP1 or WIP2 or WIP3. Interacts with RANGAP1, WPP1/MAF1, and WPP2/MAF2. Interacts with SUN1 and SUN2. Core component of the LINC complex which is composed of inner nuclear membrane SUN domain-containing proteins coupled to outer nuclear membrane WIP and WIT proteins. The LINC complex also involves nucleoskeletal proteins CRWN/LINC and possibly KAKU4 and the cytoskeletal myosin KAKU1. Interacts with WIT2. In terms of tissue distribution, expressed in seedlings, roots, stems, leaves, and flowers.

The protein resides in the nucleus envelope. The protein localises to the nucleus membrane. In terms of biological role, mediates and enhances the nuclear envelope docking of RANGAP proteins mediated by WIT1 and WIT2 in the undifferentiated cells of root tips. As component of the SUN-WIP-WIT2-KAKU1 complex, mediates the transfer of cytoplasmic forces to the nuclear envelope (NE), leading to nuclear shape changes. The sequence is that of WPP domain-interacting protein 3 (WIP3) from Arabidopsis thaliana (Mouse-ear cress).